The following is a 259-amino-acid chain: Enolase-phosphatase E1 (259 aa).

Mg(2+)-binding residues include Asp16 and Glu18. Residues 151–152 and Lys185 each bind substrate; that span reads SS. Asp210 provides a ligand contact to Mg(2+).

It belongs to the HAD-like hydrolase superfamily. MasA/MtnC family. In terms of assembly, monomer. The cofactor is Mg(2+).

The protein localises to the cytoplasm. The protein resides in the nucleus. The catalysed reaction is 5-methylsulfanyl-2,3-dioxopentyl phosphate + H2O = 1,2-dihydroxy-5-(methylsulfanyl)pent-1-en-3-one + phosphate. It participates in amino-acid biosynthesis; L-methionine biosynthesis via salvage pathway; L-methionine from S-methyl-5-thio-alpha-D-ribose 1-phosphate: step 3/6. It functions in the pathway amino-acid biosynthesis; L-methionine biosynthesis via salvage pathway; L-methionine from S-methyl-5-thio-alpha-D-ribose 1-phosphate: step 4/6. In terms of biological role, bifunctional enzyme that catalyzes the enolization of 2,3-diketo-5-methylthiopentyl-1-phosphate (DK-MTP-1-P) into the intermediate 2-hydroxy-3-keto-5-methylthiopentenyl-1-phosphate (HK-MTPenyl-1-P), which is then dephosphorylated to form the acireductone 1,2-dihydroxy-3-keto-5-methylthiopentene (DHK-MTPene). The sequence is that of Enolase-phosphatase E1 (enoph1) from Xenopus tropicalis (Western clawed frog).